Here is a 337-residue protein sequence, read N- to C-terminus: Adenosine deaminase (337 aa).

2 residues coordinate Zn(2+): His12 and His14. Residues His14, Asp16, and Gly170 each contribute to the substrate site. His197 lines the Zn(2+) pocket. The active-site Proton donor is the Glu200. Residue Asp278 participates in Zn(2+) binding. Asp279 is a substrate binding site.

Belongs to the metallo-dependent hydrolases superfamily. Adenosine and AMP deaminases family. Adenosine deaminase subfamily. The cofactor is Zn(2+).

The enzyme catalyses adenosine + H2O + H(+) = inosine + NH4(+). It catalyses the reaction 2'-deoxyadenosine + H2O + H(+) = 2'-deoxyinosine + NH4(+). Catalyzes the hydrolytic deamination of adenosine and 2-deoxyadenosine. The chain is Adenosine deaminase from Pectobacterium atrosepticum (strain SCRI 1043 / ATCC BAA-672) (Erwinia carotovora subsp. atroseptica).